We begin with the raw amino-acid sequence, 179 residues long: Stathmin-2 (179 aa).

Positions 1-26 (MAKTAMAYKEKMKELSMLSLICSCFY) are membrane attachment. Serine 16 carries the phosphoserine modification. S-palmitoyl cysteine attachment occurs at residues cysteine 22 and cysteine 24. An SLD domain is found at 38 to 179 (DDMEVKQINK…NKELQVELSG (142 aa)). The tract at residues 39–96 (DMEVKQINKRASGQAFELILKPPSPISEAPRTLASPKKKDLSLEEIQKKLEAAEGRRK) is regulatory/phosphorylation domain. Serine 50 carries the post-translational modification Phosphoserine. Phosphoserine; by MAPK8 is present on residues serine 62 and serine 73. A coiled-coil region spans residues 75-179 (KKKDLSLEEI…NKELQVELSG (105 aa)). Residues serine 80 and serine 97 each carry the phosphoserine modification.

It belongs to the stathmin family. In terms of assembly, interacts with ITM2C. Interacts with MAPK8. Interacts with KIFBP. Interacts (via the N-terminal region) with CIB1 (via C-terminal region); the interaction is direct, occurs in a calcium-dependent manner and attenuates the neurite outgrowth inhibition of STMN2. Post-translationally, sumoylated. In terms of processing, phosphorylated by MAPK9 and MAPK10 in the developing brain cortex. Phosphorylated mostly by MAPK8. N-terminal palmitoylation promotes specific anchoring to the cytosolic leaflet of Golgi membranes and subsequent vesicular trafficking along dendrites and axons. Neuronal Stathmins are substrates for palmitoyltransferases ZDHHC3, ZDHHC7 and ZDHHC15. Expressed in neurons (at protein level). Present in growth cones and abundant in developing neurons.

It is found in the cytoplasm. It localises to the perinuclear region. Its subcellular location is the cell projection. The protein localises to the growth cone. The protein resides in the axon. It is found in the membrane. It localises to the golgi apparatus. Its subcellular location is the endosome. The protein localises to the lamellipodium. Functionally, regulator of microtubule stability. When phosphorylated by MAPK8, stabilizes microtubules and consequently controls neurite length in cortical neurons. In the developing brain, negatively regulates the rate of exit from multipolar stage and retards radial migration from the ventricular zone. This chain is Stathmin-2 (Stmn2), found in Rattus norvegicus (Rat).